Consider the following 91-residue polypeptide: Small ribosomal subunit protein uS15 (91 aa).

This sequence belongs to the universal ribosomal protein uS15 family. As to quaternary structure, part of the 30S ribosomal subunit. Forms a bridge to the 50S subunit in the 70S ribosome, contacting the 23S rRNA.

Its function is as follows. One of the primary rRNA binding proteins, it binds directly to 16S rRNA where it helps nucleate assembly of the platform of the 30S subunit by binding and bridging several RNA helices of the 16S rRNA. In terms of biological role, forms an intersubunit bridge (bridge B4) with the 23S rRNA of the 50S subunit in the ribosome. The chain is Small ribosomal subunit protein uS15 from Rickettsia africae (strain ESF-5).